Reading from the N-terminus, the 490-residue chain is Aspartyl/glutamyl-tRNA(Asn/Gln) amidotransferase subunit B (490 aa).

It belongs to the GatB/GatE family. GatB subfamily. As to quaternary structure, heterotrimer of A, B and C subunits.

It catalyses the reaction L-glutamyl-tRNA(Gln) + L-glutamine + ATP + H2O = L-glutaminyl-tRNA(Gln) + L-glutamate + ADP + phosphate + H(+). It carries out the reaction L-aspartyl-tRNA(Asn) + L-glutamine + ATP + H2O = L-asparaginyl-tRNA(Asn) + L-glutamate + ADP + phosphate + 2 H(+). In terms of biological role, allows the formation of correctly charged Asn-tRNA(Asn) or Gln-tRNA(Gln) through the transamidation of misacylated Asp-tRNA(Asn) or Glu-tRNA(Gln) in organisms which lack either or both of asparaginyl-tRNA or glutaminyl-tRNA synthetases. The reaction takes place in the presence of glutamine and ATP through an activated phospho-Asp-tRNA(Asn) or phospho-Glu-tRNA(Gln). The sequence is that of Aspartyl/glutamyl-tRNA(Asn/Gln) amidotransferase subunit B from Burkholderia vietnamiensis (strain G4 / LMG 22486) (Burkholderia cepacia (strain R1808)).